The primary structure comprises 610 residues: 1,8-cineol synthase, chloroplastic (610 aa).

A chloroplast-targeting transit peptide spans 1-51 (MNHHLIITPIFHLQIMLPVATLKRPPPPAATCSIYSFSRGTPSLVSKARLS). (2E)-geranyl diphosphate is bound by residues Arg-322, Asp-359, Asp-363, Arg-500, and Asn-503. Mg(2+) contacts are provided by Asp-359 and Asp-363. Positions 359 to 363 (DDVYD) match the DDXXD motif motif. Mg(2+)-binding residues include Asn-503, Thr-507, and Glu-511.

This sequence belongs to the terpene synthase family. Tpsb subfamily. Monomer. Mg(2+) serves as cofactor. It depends on Mn(2+) as a cofactor. In terms of tissue distribution, confined to buds and flowers.

The protein resides in the plastid. Its subcellular location is the chloroplast. The catalysed reaction is (2E)-geranyl diphosphate + H2O = 1,8-cineole + diphosphate. It catalyses the reaction (2E)-geranyl diphosphate = limonene + diphosphate. The enzyme catalyses (2E)-geranyl diphosphate = sabinene + diphosphate. It carries out the reaction (2E)-geranyl diphosphate = (E)-beta-ocimene + diphosphate. The catalysed reaction is (2E)-geranyl diphosphate = beta-myrcene + diphosphate. It catalyses the reaction (2E)-geranyl diphosphate = alpha-pinene + diphosphate. The enzyme catalyses (2E)-geranyl diphosphate + H2O = (S)-alpha-terpineol + diphosphate. It participates in secondary metabolite biosynthesis; terpenoid biosynthesis. Monoterpene synthase involved in the biosynthesis of monoterpene natural products of the 'cineole cassette', volatile compounds present in floral scent. Catalyzes the conversion of (2E)-geranyl diphosphate (GPP) into 1,8-cineole and, as minor products, limonene, sabinene, (E)-beta-ocimene, beta-myrcene, alpha-pinene and alpha-terpineol. The chain is 1,8-cineol synthase, chloroplastic from Nicotiana suaveolens (Australian tobacco).